We begin with the raw amino-acid sequence, 102 residues long: NADH-quinone oxidoreductase subunit K 1 (102 aa).

3 consecutive transmembrane segments (helical) span residues 5–25, 31–51, and 65–85; these read LSHYLTVSAILFTLGVFGIFL, IVILMSVELILLSVNINMVAF, and LFILTVAAAEAAIGLAILVVF.

This sequence belongs to the complex I subunit 4L family. NDH-1 is composed of 14 different subunits. Subunits NuoA, H, J, K, L, M, N constitute the membrane sector of the complex.

It localises to the cell inner membrane. The enzyme catalyses a quinone + NADH + 5 H(+)(in) = a quinol + NAD(+) + 4 H(+)(out). Its function is as follows. NDH-1 shuttles electrons from NADH, via FMN and iron-sulfur (Fe-S) centers, to quinones in the respiratory chain. The immediate electron acceptor for the enzyme in this species is believed to be ubiquinone. Couples the redox reaction to proton translocation (for every two electrons transferred, four hydrogen ions are translocated across the cytoplasmic membrane), and thus conserves the redox energy in a proton gradient. The protein is NADH-quinone oxidoreductase subunit K 1 of Rhizobium etli (strain CIAT 652).